The sequence spans 90 residues: DNA-directed RNA polymerase subunit omega (90 aa).

Belongs to the RNA polymerase subunit omega family. As to quaternary structure, the RNAP catalytic core consists of 2 alpha, 1 beta, 1 beta' and 1 omega subunit. When a sigma factor is associated with the core the holoenzyme is formed, which can initiate transcription.

The catalysed reaction is RNA(n) + a ribonucleoside 5'-triphosphate = RNA(n+1) + diphosphate. Promotes RNA polymerase assembly. Latches the N- and C-terminal regions of the beta' subunit thereby facilitating its interaction with the beta and alpha subunits. Required for kasugamycin production and aerial mycelium formation in S.kasugaensis and responsible for pleiotropy. The polypeptide is DNA-directed RNA polymerase subunit omega (rpoZ) (Streptomyces kasugaensis).